We begin with the raw amino-acid sequence, 161 residues long: 2-C-methyl-D-erythritol 2,4-cyclodiphosphate synthase (161 aa).

2 residues coordinate a divalent metal cation: Asp14 and His16. 4-CDP-2-C-methyl-D-erythritol 2-phosphate is bound by residues 14 to 16 (DVH) and 40 to 41 (HS). His48 provides a ligand contact to a divalent metal cation. 4-CDP-2-C-methyl-D-erythritol 2-phosphate contacts are provided by residues 62–64 (DLG), Phe142, and Arg145.

The protein belongs to the IspF family. Homotrimer. It depends on a divalent metal cation as a cofactor.

The catalysed reaction is 4-CDP-2-C-methyl-D-erythritol 2-phosphate = 2-C-methyl-D-erythritol 2,4-cyclic diphosphate + CMP. Its pathway is isoprenoid biosynthesis; isopentenyl diphosphate biosynthesis via DXP pathway; isopentenyl diphosphate from 1-deoxy-D-xylulose 5-phosphate: step 4/6. Involved in the biosynthesis of isopentenyl diphosphate (IPP) and dimethylallyl diphosphate (DMAPP), two major building blocks of isoprenoid compounds. Catalyzes the conversion of 4-diphosphocytidyl-2-C-methyl-D-erythritol 2-phosphate (CDP-ME2P) to 2-C-methyl-D-erythritol 2,4-cyclodiphosphate (ME-CPP) with a corresponding release of cytidine 5-monophosphate (CMP). This Acidothermus cellulolyticus (strain ATCC 43068 / DSM 8971 / 11B) protein is 2-C-methyl-D-erythritol 2,4-cyclodiphosphate synthase.